The chain runs to 768 residues: Phosphoribosylformylglycinamidine synthase subunit PurL (768 aa).

Residue His-44 is part of the active site. Residues Tyr-47 and Lys-86 each coordinate ATP. A Mg(2+)-binding site is contributed by Glu-88. Substrate is bound by residues 89 to 92 (SHNH) and Arg-111. His-90 functions as the Proton acceptor in the catalytic mechanism. Asp-112 lines the Mg(2+) pocket. Gln-235 contributes to the substrate binding site. Asp-263 lines the Mg(2+) pocket. 307–309 (ESQ) contributes to the substrate binding site. 2 residues coordinate ATP: Asp-518 and Gly-555. Mg(2+) is bound at residue Asn-556. Ser-558 contributes to the substrate binding site.

The protein belongs to the FGAMS family. As to quaternary structure, monomer. Part of the FGAM synthase complex composed of 1 PurL, 1 PurQ and 2 PurS subunits.

It localises to the cytoplasm. It catalyses the reaction N(2)-formyl-N(1)-(5-phospho-beta-D-ribosyl)glycinamide + L-glutamine + ATP + H2O = 2-formamido-N(1)-(5-O-phospho-beta-D-ribosyl)acetamidine + L-glutamate + ADP + phosphate + H(+). The protein operates within purine metabolism; IMP biosynthesis via de novo pathway; 5-amino-1-(5-phospho-D-ribosyl)imidazole from N(2)-formyl-N(1)-(5-phospho-D-ribosyl)glycinamide: step 1/2. Its function is as follows. Part of the phosphoribosylformylglycinamidine synthase complex involved in the purines biosynthetic pathway. Catalyzes the ATP-dependent conversion of formylglycinamide ribonucleotide (FGAR) and glutamine to yield formylglycinamidine ribonucleotide (FGAM) and glutamate. The FGAM synthase complex is composed of three subunits. PurQ produces an ammonia molecule by converting glutamine to glutamate. PurL transfers the ammonia molecule to FGAR to form FGAM in an ATP-dependent manner. PurS interacts with PurQ and PurL and is thought to assist in the transfer of the ammonia molecule from PurQ to PurL. In Synechococcus sp. (strain JA-2-3B'a(2-13)) (Cyanobacteria bacterium Yellowstone B-Prime), this protein is Phosphoribosylformylglycinamidine synthase subunit PurL.